Consider the following 596-residue polypeptide: Aspartate--tRNA(Asp/Asn) ligase (596 aa).

Glu-175 lines the L-aspartate pocket. Residues 199–202 form an aspartate region; that stretch reads QQYK. The L-aspartate site is built by Arg-221 and His-454. 221 to 223 serves as a coordination point for ATP; it reads RDE. Residue Glu-488 participates in ATP binding. An L-aspartate-binding site is contributed by Arg-495. 540-543 is an ATP binding site; that stretch reads GIDR.

Belongs to the class-II aminoacyl-tRNA synthetase family. Type 1 subfamily. As to quaternary structure, homodimer.

It is found in the cytoplasm. The catalysed reaction is tRNA(Asx) + L-aspartate + ATP = L-aspartyl-tRNA(Asx) + AMP + diphosphate. Its function is as follows. Aspartyl-tRNA synthetase with relaxed tRNA specificity since it is able to aspartylate not only its cognate tRNA(Asp) but also tRNA(Asn). Reaction proceeds in two steps: L-aspartate is first activated by ATP to form Asp-AMP and then transferred to the acceptor end of tRNA(Asp/Asn). The polypeptide is Aspartate--tRNA(Asp/Asn) ligase (Rhizobium johnstonii (strain DSM 114642 / LMG 32736 / 3841) (Rhizobium leguminosarum bv. viciae)).